The following is a 470-amino-acid chain: MNPNQKIITIGSISLGLVVFNVLLHVVSIIVTVLILGRGGNNGICNETVVREYNETVRIEKVTQWHNTSVVEYMPYWNEGTYMNNTEAICDVKGFAPFSKDNGIRIGSRGHVFVIREPFVSCSPTECRTFFLTQGSLLNDKHSNGTVKDRSPFRTLMSVEVGQSPNVYQARFEAVAWSATACHDGKKWMTVGVTGPDSKAVAVVHYGGVPTDVVNSWAGDILRTQESSCTCIQGDCYWVMTDGPANRQAQYRIYKANQGKIVGQTDVSFNGGHIEECSCYPNDGKVECVCRDNWTGTNRPVLVISPDLAYRVGYLCAGLPSDTPRGEDAQFTGSCTSPMGNQGYGVKGFGFRQGTDVWMGRTISRTSRSGFEILRVRNGWTQTSKEQVRKQVVVDNLNWSGYSGSFTLPVELSGKYCLVPCFWVEMIRGKPEEKTIWTSSSSIVMCGVDYEVADWSWHDGAILPFDIDKM.

Residues 1 to 14 (MNPNQKIITIGSIS) lie on the Intravirion side of the membrane. The segment at 11–32 (GSISLGLVVFNVLLHVVSIIVT) is involved in apical transport and lipid raft association. Residues 15 to 35 (LGLVVFNVLLHVVSIIVTVLI) form a helical membrane-spanning segment. The interval 32-86 (TVLILGRGGNNGICNETVVREYNETVRIEKVTQWHNTSVVEYMPYWNEGTYMNNT) is hypervariable stalk region. The Virion surface segment spans residues 36–470 (LGRGGNNGIC…AILPFDIDKM (435 aa)). N-linked (GlcNAc...) asparagine; by host glycosylation is found at Asn46, Asn54, Asn67, and Asn84. The tract at residues 89–470 (ICDVKGFAPF…AILPFDIDKM (382 aa)) is head of neuraminidase. Cystine bridges form between Cys90/Cys417, Cys122/Cys127, Cys182/Cys229, Cys231/Cys236, Cys277/Cys290, Cys279/Cys288, Cys316/Cys335, and Cys421/Cys446. Arg116 contributes to the substrate binding site. Asn144 carries an N-linked (GlcNAc...) asparagine; by host glycan. The active-site Proton donor/acceptor is the Asp149. Arg150 lines the substrate pocket. A substrate-binding site is contributed by 275 to 276 (EE). Arg291 serves as a coordination point for substrate. Position 292 (Asp292) interacts with Ca(2+). Asn293 carries N-linked (GlcNAc...) asparagine; by host glycosylation. Residues Gly296 and Asp322 each coordinate Ca(2+). Residue Arg368 coordinates substrate. N-linked (GlcNAc...) asparagine; by host glycosylation is present at Asn398. The active-site Nucleophile is the Tyr402.

Belongs to the glycosyl hydrolase 34 family. As to quaternary structure, homotetramer. The cofactor is Ca(2+). In terms of processing, N-glycosylated.

The protein localises to the virion membrane. It localises to the host apical cell membrane. It catalyses the reaction Hydrolysis of alpha-(2-&gt;3)-, alpha-(2-&gt;6)-, alpha-(2-&gt;8)- glycosidic linkages of terminal sialic acid residues in oligosaccharides, glycoproteins, glycolipids, colominic acid and synthetic substrates.. Its activity is regulated as follows. Inhibited by the neuraminidase inhibitors zanamivir (Relenza) and oseltamivir (Tamiflu). These drugs interfere with the release of progeny virus from infected cells and are effective against all influenza strains. Resistance to neuraminidase inhibitors is quite rare. Functionally, catalyzes the removal of terminal sialic acid residues from viral and cellular glycoconjugates. Cleaves off the terminal sialic acids on the glycosylated HA during virus budding to facilitate virus release. Additionally helps virus spread through the circulation by further removing sialic acids from the cell surface. These cleavages prevent self-aggregation and ensure the efficient spread of the progeny virus from cell to cell. Otherwise, infection would be limited to one round of replication. Described as a receptor-destroying enzyme because it cleaves a terminal sialic acid from the cellular receptors. May facilitate viral invasion of the upper airways by cleaving the sialic acid moieties on the mucin of the airway epithelial cells. Likely to plays a role in the budding process through its association with lipid rafts during intracellular transport. May additionally display a raft-association independent effect on budding. Plays a role in the determination of host range restriction on replication and virulence. Sialidase activity in late endosome/lysosome traffic seems to enhance virus replication. The sequence is that of Neuraminidase from Aves (Horse).